Reading from the N-terminus, the 230-residue chain is Cytochrome c oxidase subunit 2 (230 aa).

Over 1-14 (MAHPSQLGFQDAAS) the chain is Mitochondrial intermembrane. Residues 15–45 (PVMEELLHFHDHALMIVLLISTLVLYIIVAM) form a helical membrane-spanning segment. Topologically, residues 46–59 (VSTKLTNKYILDSQ) are mitochondrial matrix. The helical transmembrane segment at 60–87 (EIEIVWTVLPAVILILIALPSLRILYLM) threads the bilayer. Topologically, residues 88–230 (DEINDPHLTI…KWSTMMLEDA (143 aa)) are mitochondrial intermembrane. Residues His161, Cys196, Glu198, Cys200, His204, and Met207 each contribute to the Cu cation site. Glu198 provides a ligand contact to Mg(2+).

It belongs to the cytochrome c oxidase subunit 2 family. Component of the cytochrome c oxidase (complex IV, CIV), a multisubunit enzyme composed of 14 subunits. The complex is composed of a catalytic core of 3 subunits MT-CO1, MT-CO2 and MT-CO3, encoded in the mitochondrial DNA, and 11 supernumerary subunits COX4I, COX5A, COX5B, COX6A, COX6B, COX6C, COX7A, COX7B, COX7C, COX8 and NDUFA4, which are encoded in the nuclear genome. The complex exists as a monomer or a dimer and forms supercomplexes (SCs) in the inner mitochondrial membrane with NADH-ubiquinone oxidoreductase (complex I, CI) and ubiquinol-cytochrome c oxidoreductase (cytochrome b-c1 complex, complex III, CIII), resulting in different assemblies (supercomplex SCI(1)III(2)IV(1) and megacomplex MCI(2)III(2)IV(2)). Found in a complex with TMEM177, COA6, COX18, COX20, SCO1 and SCO2. Interacts with TMEM177 in a COX20-dependent manner. Interacts with COX20. Interacts with COX16. Cu cation serves as cofactor.

It is found in the mitochondrion inner membrane. It carries out the reaction 4 Fe(II)-[cytochrome c] + O2 + 8 H(+)(in) = 4 Fe(III)-[cytochrome c] + 2 H2O + 4 H(+)(out). Functionally, component of the cytochrome c oxidase, the last enzyme in the mitochondrial electron transport chain which drives oxidative phosphorylation. The respiratory chain contains 3 multisubunit complexes succinate dehydrogenase (complex II, CII), ubiquinol-cytochrome c oxidoreductase (cytochrome b-c1 complex, complex III, CIII) and cytochrome c oxidase (complex IV, CIV), that cooperate to transfer electrons derived from NADH and succinate to molecular oxygen, creating an electrochemical gradient over the inner membrane that drives transmembrane transport and the ATP synthase. Cytochrome c oxidase is the component of the respiratory chain that catalyzes the reduction of oxygen to water. Electrons originating from reduced cytochrome c in the intermembrane space (IMS) are transferred via the dinuclear copper A center (CU(A)) of subunit 2 and heme A of subunit 1 to the active site in subunit 1, a binuclear center (BNC) formed by heme A3 and copper B (CU(B)). The BNC reduces molecular oxygen to 2 water molecules using 4 electrons from cytochrome c in the IMS and 4 protons from the mitochondrial matrix. The sequence is that of Cytochrome c oxidase subunit 2 (mt-co2) from Salmo salar (Atlantic salmon).